Reading from the N-terminus, the 268-residue chain is Phosphatidylglycerol--prolipoprotein diacylglyceryl transferase (268 aa).

3 consecutive transmembrane segments (helical) span residues 25–45 (WYGV…TKVF), 57–77 (YLFY…HCFF), and 93–113 (VWHG…AVYF). Arg-142 lines the a 1,2-diacyl-sn-glycero-3-phospho-(1'-sn-glycerol) pocket. 4 helical membrane passes run 151–171 (IIGI…DLLP), 175–195 (VQLY…LAYW), 204–224 (GLLL…LEFF), and 236–256 (PLSV…LLIF).

The protein belongs to the Lgt family.

The protein localises to the cell inner membrane. It catalyses the reaction L-cysteinyl-[prolipoprotein] + a 1,2-diacyl-sn-glycero-3-phospho-(1'-sn-glycerol) = an S-1,2-diacyl-sn-glyceryl-L-cysteinyl-[prolipoprotein] + sn-glycerol 1-phosphate + H(+). It functions in the pathway protein modification; lipoprotein biosynthesis (diacylglyceryl transfer). Functionally, catalyzes the transfer of the diacylglyceryl group from phosphatidylglycerol to the sulfhydryl group of the N-terminal cysteine of a prolipoprotein, the first step in the formation of mature lipoproteins. This Chloroherpeton thalassium (strain ATCC 35110 / GB-78) protein is Phosphatidylglycerol--prolipoprotein diacylglyceryl transferase.